A 462-amino-acid chain; its full sequence is Argininosuccinate lyase (462 aa).

The protein belongs to the lyase 1 family. Argininosuccinate lyase subfamily.

The protein localises to the cytoplasm. It carries out the reaction 2-(N(omega)-L-arginino)succinate = fumarate + L-arginine. The protein operates within amino-acid biosynthesis; L-arginine biosynthesis; L-arginine from L-ornithine and carbamoyl phosphate: step 3/3. This chain is Argininosuccinate lyase, found in Rippkaea orientalis (strain PCC 8801 / RF-1) (Cyanothece sp. (strain PCC 8801)).